Here is a 102-residue protein sequence, read N- to C-terminus: Acid shock protein (102 aa).

The signal sequence occupies residues 1 to 21 (MKKVLALVVAAAMGLSSAAFA). Residues 21–41 (AAETTTTPAPTATTTKAAPAK) show a composition bias toward low complexity. The segment at 21–102 (AAETTTTPAP…PAKPAAQPAA (82 aa)) is disordered. The propeptide occupies 22–58 (AETTTTPAPTATTTKAAPAKTTHHKKQHKAAPAQKAQ). Positions 80–90 (AAKKHAKKHSH) are enriched in basic residues. Over residues 91–102 (QQPAKPAAQPAA) the composition is skewed to low complexity.

Belongs to the Asr family. Post-translationally, proteolytic processing gives rise to the active protein.

The protein resides in the periplasm. Its function is as follows. Required for growth and/or survival at acidic conditions. In Escherichia coli (strain K12 / MC4100 / BW2952), this protein is Acid shock protein.